The sequence spans 842 residues: Leucine--tRNA ligase (842 aa).

A 'HIGH' region motif is present at residues 44–55 (PYPSANGLHVGH). The 'KMSKS' region motif lies at 619–623 (KMSKS). Lysine 622 contributes to the ATP binding site.

The protein belongs to the class-I aminoacyl-tRNA synthetase family.

It localises to the cytoplasm. The enzyme catalyses tRNA(Leu) + L-leucine + ATP = L-leucyl-tRNA(Leu) + AMP + diphosphate. This is Leucine--tRNA ligase from Borrelia duttonii (strain Ly).